The sequence spans 89 residues: Small ribosomal subunit protein uS15 (89 aa).

It belongs to the universal ribosomal protein uS15 family. Part of the 30S ribosomal subunit. Forms a bridge to the 50S subunit in the 70S ribosome, contacting the 23S rRNA.

Its function is as follows. One of the primary rRNA binding proteins, it binds directly to 16S rRNA where it helps nucleate assembly of the platform of the 30S subunit by binding and bridging several RNA helices of the 16S rRNA. In terms of biological role, forms an intersubunit bridge (bridge B4) with the 23S rRNA of the 50S subunit in the ribosome. This chain is Small ribosomal subunit protein uS15, found in Escherichia coli O157:H7.